Here is an 872-residue protein sequence, read N- to C-terminus: Tetratricopeptide repeat protein 16 (872 aa).

A disordered region spans residues 1–20 (MTDSDEDALKVDQGPSQDIP). TPR repeat units lie at residues 61 to 94 (VREY…DPQL), 96 to 128 (DFYA…QQDN), 136 to 169 (TFVL…QPEK), 251 to 284 (AQQA…NPLD), 285 to 318 (PSFF…VTED), 331 to 364 (LLTY…EQQE), 365 to 398 (KGLY…SPQD), and 406 to 439 (GLLQ…NPQK). Disordered stretches follow at residues 557 to 640 (ATPE…ETET) and 653 to 872 (TAMT…YEVL). Acidic residues predominate over residues 577-590 (KEEEEKEEEEQKEE). Positions 591-604 (EEQKKEEKKEEKKP) are enriched in basic and acidic residues. Composition is skewed to polar residues over residues 610–640 (KVAS…ETET), 653–675 (TAMT…NNRE), 689–709 (GQRQ…NFSK), and 721–754 (KTKA…SQGP). Residues 762–783 (KTTRSPRQRPRKVKAARGRSWR) show a composition bias toward basic residues. 2 stretches are compositionally biased toward polar residues: residues 799–827 (RSST…GQRT) and 839–861 (GMSS…SKTE).

The protein is Tetratricopeptide repeat protein 16 (TTC16) of Macaca fascicularis (Crab-eating macaque).